The following is a 99-amino-acid chain: Nucleoid-associated protein EbfC (99 aa).

Belongs to the YbaB/EbfC family. As to quaternary structure, homodimer.

The protein localises to the cytoplasm. It is found in the nucleoid. Functionally, binds to DNA and alters its conformation. May be involved in regulation of gene expression, nucleoid organization and DNA protection. In Borrelia hermsii (strain HS1 / DAH), this protein is Nucleoid-associated protein EbfC.